The sequence spans 203 residues: Dual specificity phosphatase 29 (203 aa).

Residues 47–193 enclose the Tyrosine-protein phosphatase domain; the sequence is HVNQVWPRIY…LRALDIALQE (147 aa). Residue 137 to 144 coordinates substrate; it reads HCVMGRSR. The active-site Phosphocysteine intermediate is Cys-138.

This sequence belongs to the protein-tyrosine phosphatase family. Non-receptor class dual specificity subfamily.

It localises to the cytoplasm. The protein resides in the nucleus. The catalysed reaction is O-phospho-L-tyrosyl-[protein] + H2O = L-tyrosyl-[protein] + phosphate. It carries out the reaction O-phospho-L-seryl-[protein] + H2O = L-seryl-[protein] + phosphate. The enzyme catalyses O-phospho-L-threonyl-[protein] + H2O = L-threonyl-[protein] + phosphate. Functionally, dual specificity phosphatase able to dephosphorylate phosphotyrosine, phosphoserine and phosphothreonine residues within the same substrate, with a preference for phosphotyrosine as a substrate. Involved in the modulation of AMPK and MAPK1/2 signaling pathways. In Oryzias latipes (Japanese rice fish), this protein is Dual specificity phosphatase 29 (dusp29).